The following is a 390-amino-acid chain: ATP-sensitive inward rectifier potassium channel 11 (390 aa).

Topologically, residues 1–65 (MLSRKGIIPE…LQDVFTTLVD (65 aa)) are cytoplasmic. Residues Asn-48 and Arg-50 each coordinate ATP. Residues 66 to 92 (LKWPHTLLIFTMSFLCSWLLFAMAWWL) traverse the membrane as a helical segment. The Extracellular segment spans residues 93–116 (IAFAHGDLAPSEGTAEPCVTSIHS). Cys-110 and Cys-142 form a disulfide bridge. Positions 117–133 (FSSAFLFSIEVQVTIGF) form an intramembrane region, discontinuously helical; Pore-forming. K(+)-binding residues include Thr-130 and Phe-133. A Selectivity filter motif is present at residues 130 to 135 (TIGFGG). Topologically, residues 134 to 142 (GGRMVTEEC) are extracellular. Residues 143–171 (PLAILILIVQNIVGLMINAIMLGCIFMKT) traverse the membrane as a helical segment. Over 172–390 (AQAHRRAETL…KFSISPDSLS (219 aa)) the chain is Cytoplasmic. Arg-176 contributes to the a 1,2-diacyl-sn-glycero-3-phospho-(1D-myo-inositol-4,5-bisphosphate) binding site. Tyr-330 lines the ATP pocket. Thr-341 carries the post-translational modification Phosphothreonine; by MAPK1. Ser-385 is subject to Phosphoserine; by MAPK1.

The protein belongs to the inward rectifier-type potassium channel (TC 1.A.2.1) family. KCNJ11 subfamily. In terms of assembly, homotetramer; the homotetramer binds four ATP molecules (one ATP per subunit). Forms an heterooctamer with ABCC8/SUR1; one KCNJ11 homotetramer interacts with four ABCC8/SUR1 molecules. Interacts with ABCC9/SUR2. In terms of processing, phosphorylation by MAPK1 results in changes in channel gating that destabilize the closed states and reduce the ATP sensitivity.

It is found in the membrane. The enzyme catalyses K(+)(in) = K(+)(out). KATP channels are regulated by cytoplasmic ATP/ADP ratios; ATP inhibits the channel by closing the pore, while ADP activates the channel. Activated by phosphatidylinositol 4,5-biphosphate (PtdIns(4,5)P2). Its function is as follows. Inward rectifier potassium channel that forms the pore of ATP-sensitive potassium channels (KATP), regulating potassium permeability as a function of cytoplasmic ATP and ADP concentrations in many different cells. Inward rectifier potassium channels are characterized by a greater tendency to allow potassium to flow into the cell rather than out of it. Their voltage dependence is regulated by the concentration of extracellular potassium; as external potassium is raised, the voltage range of the channel opening shifts to more positive voltages. The inward rectification is mainly due to the blockage of outward current by internal magnesium. Can be blocked by extracellular barium. In pancreatic cells, it forms KATP channels with ABCC8/SUR1. Can form cardiac and smooth muscle-type KATP channels with ABCC9. This chain is ATP-sensitive inward rectifier potassium channel 11 (KCNJ11), found in Homo sapiens (Human).